We begin with the raw amino-acid sequence, 431 residues long: Trigger factor (431 aa).

One can recognise a PPIase FKBP-type domain in the interval 163–248 (GHFAVIDFTG…LSEIKVKELP (86 aa)).

The protein belongs to the FKBP-type PPIase family. Tig subfamily.

It localises to the cytoplasm. It carries out the reaction [protein]-peptidylproline (omega=180) = [protein]-peptidylproline (omega=0). In terms of biological role, involved in protein export. Acts as a chaperone by maintaining the newly synthesized protein in an open conformation. Functions as a peptidyl-prolyl cis-trans isomerase. In Geobacter sulfurreducens (strain ATCC 51573 / DSM 12127 / PCA), this protein is Trigger factor.